Consider the following 382-residue polypeptide: UDP-N-acetylglucosamine--N-acetylmuramyl-(pentapeptide) pyrophosphoryl-undecaprenol N-acetylglucosamine transferase (382 aa).

UDP-N-acetyl-alpha-D-glucosamine contacts are provided by residues 22–24, asparagine 134, arginine 186, serine 212, 285–290, and glutamine 311; these read TGG and ALTVAE.

The protein belongs to the glycosyltransferase 28 family. MurG subfamily.

It localises to the cell inner membrane. It catalyses the reaction di-trans,octa-cis-undecaprenyl diphospho-N-acetyl-alpha-D-muramoyl-L-alanyl-D-glutamyl-meso-2,6-diaminopimeloyl-D-alanyl-D-alanine + UDP-N-acetyl-alpha-D-glucosamine = di-trans,octa-cis-undecaprenyl diphospho-[N-acetyl-alpha-D-glucosaminyl-(1-&gt;4)]-N-acetyl-alpha-D-muramoyl-L-alanyl-D-glutamyl-meso-2,6-diaminopimeloyl-D-alanyl-D-alanine + UDP + H(+). It functions in the pathway cell wall biogenesis; peptidoglycan biosynthesis. In terms of biological role, cell wall formation. Catalyzes the transfer of a GlcNAc subunit on undecaprenyl-pyrophosphoryl-MurNAc-pentapeptide (lipid intermediate I) to form undecaprenyl-pyrophosphoryl-MurNAc-(pentapeptide)GlcNAc (lipid intermediate II). The sequence is that of UDP-N-acetylglucosamine--N-acetylmuramyl-(pentapeptide) pyrophosphoryl-undecaprenol N-acetylglucosamine transferase from Pseudoalteromonas atlantica (strain T6c / ATCC BAA-1087).